A 140-amino-acid polypeptide reads, in one-letter code: 3-hydroxyacyl-[acyl-carrier-protein] dehydratase FabZ (140 aa).

Residue His-47 is part of the active site.

This sequence belongs to the thioester dehydratase family. FabZ subfamily.

The protein resides in the cytoplasm. The catalysed reaction is a (3R)-hydroxyacyl-[ACP] = a (2E)-enoyl-[ACP] + H2O. Functionally, involved in unsaturated fatty acids biosynthesis. Catalyzes the dehydration of short chain beta-hydroxyacyl-ACPs and long chain saturated and unsaturated beta-hydroxyacyl-ACPs. The chain is 3-hydroxyacyl-[acyl-carrier-protein] dehydratase FabZ from Streptococcus pneumoniae (strain 70585).